A 535-amino-acid chain; its full sequence is Dimethylaniline monooxygenase [N-oxide-forming] 2 (535 aa).

Alanine 2 is modified (N-acetylalanine). Residues 9-13, glutamate 32, 40-41, and 61-62 contribute to the FAD site; these read GAGVS, LW, and NT. Residues 60–61 and 195–198 each bind NADP(+); these read TN and SAAD. Lysine 492 is covalently cross-linked (Glycyl lysine isopeptide (Lys-Gly) (interchain with G-Cter in SUMO)). The helical transmembrane segment at 510-530 threads the bilayer; that stretch reads APVSFLLKILGLLAVVLAFFF.

This sequence belongs to the FMO family. It depends on FAD as a cofactor. Mg(2+) is required as a cofactor.

The protein localises to the microsome membrane. The protein resides in the endoplasmic reticulum membrane. In terms of biological role, catalyzes the oxidative metabolism of numerous xenobiotics, including mainly therapeutic drugs and insecticides that contain a soft nucleophile, most commonly nitrogen and sulfur and participates to their bioactivation. Catalyzes the S-oxygenation of the prodrug ethionamide (ETA) to the S-oxide (ETASO), the first step in its bioactivation following by the second oxygenation to the sulfinic acid but to a lesser extend. The polypeptide is Dimethylaniline monooxygenase [N-oxide-forming] 2 (Mus musculus (Mouse)).